We begin with the raw amino-acid sequence, 546 residues long: Probable protein kinase UbiB (546 aa).

In terms of domain architecture, Protein kinase spans 124 to 502; the sequence is DFDIQPLASA…HVRQSQSRYL (379 aa). ATP contacts are provided by residues 130–138 and Lys-153; that span reads LASASIAQV. The active-site Proton acceptor is the Asp-288. 2 helical membrane-spanning segments follow: residues 501–521 and 522–542; these read YLLG…VNRP and EWGL…LVGW.

It belongs to the ABC1 family. UbiB subfamily.

It is found in the cell inner membrane. It functions in the pathway cofactor biosynthesis; ubiquinone biosynthesis [regulation]. In terms of biological role, is probably a protein kinase regulator of UbiI activity which is involved in aerobic coenzyme Q (ubiquinone) biosynthesis. In Salmonella enteritidis PT4 (strain P125109), this protein is Probable protein kinase UbiB.